Reading from the N-terminus, the 89-residue chain is Small ribosomal subunit protein bS20 (89 aa).

The protein belongs to the bacterial ribosomal protein bS20 family.

Its function is as follows. Binds directly to 16S ribosomal RNA. This is Small ribosomal subunit protein bS20 from Syntrophus aciditrophicus (strain SB).